We begin with the raw amino-acid sequence, 58 residues long: MALWYQAMIAKFGEQVVDAKVWAPAKRVGVHEAKTRLSELLRLVYGGQRLRLPAAASR.

Functionally, putative antitoxin component of a possible type II toxin-antitoxin (TA) system. The cognate toxin is VapC16. This is Putative antitoxin VapB16 (vapB16) from Mycobacterium tuberculosis (strain ATCC 25618 / H37Rv).